The primary structure comprises 309 residues: MSFNLQSSKKLFIFLGKSLFSLLEAMIFALLPKPRKNVAGEIVLITGAGSGLGRLLALQFARLGSVLVLWDINKEGNEETCKMAREAGATRVHAYTCDCSQKEGVYRVADQVKKEVGDVSILINNAGIVTGKKFLDCPDELMEKSFDVNFKAHLWTYKAFLPAMIANDHGHLVCISSSAGLSGVNGLADYCASKFAAFGFAESVFVETFVQKQKGIKTTIVCPFFIKTGMFEGCTTGCPSLLPILEPKYAVEKIVEAILQEKMYLYMPKLLYFMMFLKSFLPLKTGLLIADYLGILHAMDGFVDQKKKL.

The chain crosses the membrane as a helical span at residues 11-31 (LFIFLGKSLFSLLEAMIFALL). 44 to 68 (LITGAGSGLGRLLALQFARLGSVLV) contributes to the NADP(+) binding site. Ser177 contacts substrate. Residue Tyr190 is the Proton acceptor of the active site. The chain crosses the membrane as a helical span at residues 270–290 (LLYFMMFLKSFLPLKTGLLIA).

The protein belongs to the short-chain dehydrogenases/reductases (SDR) family. In terms of tissue distribution, detected in adult lung. Detected at low levels in adult brain, heart, testis, placenta, cervix, pancreas, uterus, stomach, rectum, small intestine, colon, esophagus, thymus, skin, and skin keratinocyte. Expression is higher in psoriasis lesions relative to unaffected skin from psoriasis patients. Detected in fetal kidney, skin and lung.

Its subcellular location is the endoplasmic reticulum membrane. It catalyses the reaction all-trans-retinol--[retinol-binding protein] + NAD(+) = all-trans-retinal--[retinol-binding protein] + NADH + H(+). It functions in the pathway cofactor metabolism; retinol metabolism. Functionally, oxidoreductase with strong preference for NAD. Active in both the oxidative and reductive directions. Oxidizes all-trans-retinol in all-trans-retinaldehyde. No activity was detected with 11-cis-retinol or 11-cis-retinaldehyde as substrates with either NAD(+)/NADH or NADP(+)/NADPH. In Homo sapiens (Human), this protein is Epidermal retinol dehydrogenase 2.